The following is a 90-amino-acid chain: Small ribosomal subunit protein uS17 (90 aa).

This sequence belongs to the universal ribosomal protein uS17 family. In terms of assembly, part of the 30S ribosomal subunit.

Its function is as follows. One of the primary rRNA binding proteins, it binds specifically to the 5'-end of 16S ribosomal RNA. In Gluconobacter oxydans (strain 621H) (Gluconobacter suboxydans), this protein is Small ribosomal subunit protein uS17.